Consider the following 430-residue polypeptide: Adenylosuccinate synthetase (430 aa).

GTP-binding positions include 12 to 18 (GDEGKGK) and 40 to 42 (GHT). Asp-13 acts as the Proton acceptor in catalysis. Mg(2+) is bound by residues Asp-13 and Gly-40. Residues 13–16 (DEGK), 38–41 (NAGH), Thr-130, Arg-144, Gln-224, Thr-239, and Arg-303 each bind IMP. The active-site Proton donor is His-41. 299–305 (TVTGRKR) is a substrate binding site. GTP is bound by residues Arg-305, 331-333 (KLD), and 413-415 (STS).

It belongs to the adenylosuccinate synthetase family. Homodimer. It depends on Mg(2+) as a cofactor.

It is found in the cytoplasm. The enzyme catalyses IMP + L-aspartate + GTP = N(6)-(1,2-dicarboxyethyl)-AMP + GDP + phosphate + 2 H(+). It functions in the pathway purine metabolism; AMP biosynthesis via de novo pathway; AMP from IMP: step 1/2. Its function is as follows. Plays an important role in the de novo pathway of purine nucleotide biosynthesis. Catalyzes the first committed step in the biosynthesis of AMP from IMP. This is Adenylosuccinate synthetase from Cereibacter sphaeroides (strain KD131 / KCTC 12085) (Rhodobacter sphaeroides).